We begin with the raw amino-acid sequence, 137 residues long: Basic phospholipase A2 homolog W6D49 (137 aa).

Positions 1–16 (MRTLWILAVLLVSVDG) are cleaved as a signal peptide. 7 cysteine pairs are disulfide-bonded: cysteine 42–cysteine 131, cysteine 44–cysteine 60, cysteine 59–cysteine 111, cysteine 65–cysteine 137, cysteine 66–cysteine 104, cysteine 73–cysteine 97, and cysteine 91–cysteine 102. The important for membrane-damaging activities in eukaryotes and bacteria; heparin-binding stretch occupies residues 121–133 (KKQQFNTGIFCSK).

In terms of assembly, monomer. As to expression, expressed by the venom gland.

The protein localises to the secreted. Its activity is regulated as follows. Heparin reduces its edema-inducing activity. Its function is as follows. Snake venom phospholipase A2 homolog that lacks enzymatic activity. Shows myotoxin activities and displays edema-inducing activities. A model of myotoxic mechanism has been proposed: an apo Lys49-PLA2 is activated by the entrance of a hydrophobic molecule (e.g. fatty acid) at the hydrophobic channel of the protein leading to a reorientation of a monomer. This reorientation causes a transition between 'inactive' to 'active' states, causing alignment of C-terminal and membrane-docking sites (MDoS) side-by-side and putting the membrane-disruption sites (MDiS) in the same plane, exposed to solvent and in a symmetric position for both monomers. The MDoS region stabilizes the toxin on membrane by the interaction of charged residues with phospholipid head groups. Subsequently, the MDiS region destabilizes the membrane with penetration of hydrophobic residues. This insertion causes a disorganization of the membrane, allowing an uncontrolled influx of ions (i.e. calcium and sodium), and eventually triggering irreversible intracellular alterations and cell death. This chain is Basic phospholipase A2 homolog W6D49, found in Calloselasma rhodostoma (Malayan pit viper).